The sequence spans 214 residues: Large ribosomal subunit protein uL29m (214 aa).

The protein belongs to the universal ribosomal protein uL29 family. Component of the mitochondrial large ribosomal subunit. Mature mitochondrial ribosomes consist of a small (37S) and a large (54S) subunit. The 37S subunit contains at least 33 different proteins and 1 molecule of RNA (15S). The 54S subunit contains at least 45 different proteins and 1 molecule of RNA (21S).

Its subcellular location is the mitochondrion. In Aspergillus terreus (strain NIH 2624 / FGSC A1156), this protein is Large ribosomal subunit protein uL29m (mrpl4).